The chain runs to 1219 residues: Protein jagged-1 (1219 aa).

The signal sequence occupies residues 1-33 (MRSPRTRGRPGRPLSLLLALLCALRAKVCGASG). Topologically, residues 34–1067 (QFELEILSMQ…QRRPLKNRTD (1034 aa)) are extracellular. A glycan (N-linked (GlcNAc...) asparagine) is linked at Asn143. The DSL domain maps to 185–229 (VTCDDHYYGFGCNKFCRPRDDFFGHYACDQNGNKTCMEGWMGPEC). Disulfide bonds link Cys187-Cys196 and Cys200-Cys212. Residues 199-207 (FCRPRDDFF) form an important for interaction with NOTCH1 region. N-linked (GlcNAc...) asparagine glycosylation is present at Asn217. 40 disulfide bridges follow: Cys220-Cys229, Cys234-Cys245, Cys238-Cys251, Cys253-Cys262, Cys265-Cys276, Cys271-Cys282, Cys284-Cys293, Cys300-Cys312, Cys306-Cys322, Cys324-Cys333, Cys340-Cys351, Cys345-Cys360, Cys362-Cys371, Cys378-Cys389, Cys383-Cys398, Cys400-Cys409, Cys416-Cys427, Cys421-Cys436, Cys438-Cys447, Cys454-Cys464, Cys458-Cys473, Cys475-Cys484, Cys491-Cys502, Cys496-Cys511, Cys513-Cys522, Cys529-Cys540, Cys534-Cys549, Cys551-Cys560, Cys578-Cys605, Cys599-Cys615, Cys617-Cys626, Cys633-Cys644, Cys638-Cys653, Cys655-Cys664, Cys671-Cys682, Cys676-Cys691, Cys693-Cys702, Cys709-Cys720, Cys714-Cys729, and Cys731-Cys740. The EGF-like 1 domain maps to 230-263 (NKAICRQGCSPKHGSCKLPGDCRCQYGWQGLYCD). Residues 264–294 (KCIPHPGCVHGTCNEPWQCLCETNWGGQLCD) form the EGF-like 2; atypical domain. 2 consecutive EGF-like domains span residues 296–334 (DLNYCGTHQPCLNRGTCSNTGPDKYQCSCPEGYSGPNCE) and 336–372 (AEHACLSDPCHNRGSCKETSSGFECECSPGWTGPTCS). One can recognise an EGF-like 5; calcium-binding domain in the interval 374–410 (NIDDCSPNNCSHGGTCQDLVNGFKCVCPPQWTGKTCQ). A glycan (N-linked (GlcNAc...) asparagine) is linked at Asn382. Residues 412-448 (DANECEAKPCVNARSCKNLIASYYCDCLPGWMGQNCD) enclose the EGF-like 6; calcium-binding domain. The EGF-like 7; calcium-binding domain occupies 450–485 (NINDCLGQCQNDASCRDLVNGYRCICPPGYAGDHCE). The region spanning 487 to 523 (DIDECASNPCLNGGHCQNEINRFQCLCPTGFSGNLCQ) is the EGF-like 8; calcium-binding domain. EGF-like domains lie at 525–561 (DIDYCEPNPCQNGAQCYNRASDYFCKCPEDYEGKNCS) and 586–627 (DTPE…TYCH). Asn559 carries an N-linked (GlcNAc...) asparagine glycan. In terms of domain architecture, EGF-like 11; calcium-binding spans 629–665 (NINDCEGNPCTNGGTCIDGVNSYKCICSDGWEGAHCE). One can recognise an EGF-like 12; calcium-binding domain in the interval 667–703 (NINDCSQNPCHYGGTCRDLVNDFYCDCKNGWKGKTCH). EGF-like domains follow at residues 705–741 (RDSQCDEATCNNGGTCYDEVDTFKCMCPGGWEGTTCN) and 744–780 (RNSSCLPNPCHNGGTCVVNGDSFTCVCKEGWEGPICT). An N-linked (GlcNAc...) asparagine glycan is attached at Asn745. 11 disulfides stabilise this stretch: Cys748–Cys759, Cys753–Cys768, Cys770–Cys779, Cys786–Cys797, Cys791–Cys806, Cys808–Cys817, Cys824–Cys835, Cys829–Cys844, Cys846–Cys855, Cys925–Cys936, and Cys948–Cys958. Residues 782–818 (NTNDCSPHPCYNSGTCVDGDNWYRCECAPGFAGPDCR) enclose the EGF-like 15; calcium-binding domain. The region spanning 820-856 (NINECQSSPCAFGATCVDEINGYQCICPPGHSGAKCH) is the EGF-like 16; calcium-binding domain. 4 N-linked (GlcNAc...) asparagine glycosylation sites follow: Asn960, Asn991, Asn1045, and Asn1064. The chain crosses the membrane as a helical span at residues 1068–1093 (FLVPLLSSVLTVAWVCCLVTAFYWCV). The Cytoplasmic segment spans residues 1094-1219 (RKRRRKPSSH…QSLNRMEYIV (126 aa)). Residues 1182–1219 (REEKVPQRTPTKHPNWTNKQDNRDLESAQSLNRMEYIV) are disordered. Residues 1189-1200 (RTPTKHPNWTNK) are compositionally biased toward polar residues.

Interacts with NOTCH1. Interacts with NOTCH2 and NOTCH3. As to expression, widely expressed in a variety of tissues.

It localises to the membrane. The protein resides in the cell membrane. In terms of biological role, ligand for multiple Notch receptors and involved in the mediation of Notch signaling. May be involved in cell-fate decisions during hematopoiesis. Enhances fibroblast growth factor-induced angiogenesis (in vitro). Seems to be involved in early and late stages of mammalian cardiovascular development. Inhibits myoblast differentiation. May regulate fibroblast growth factor-induced angiogenesis. In Rattus norvegicus (Rat), this protein is Protein jagged-1 (Jag1).